A 218-amino-acid polypeptide reads, in one-letter code: Thiopurine S-methyltransferase (218 aa).

4 residues coordinate S-adenosyl-L-methionine: Trp-10, Leu-45, Glu-66, and Arg-123.

The protein belongs to the class I-like SAM-binding methyltransferase superfamily. TPMT family.

Its subcellular location is the cytoplasm. It catalyses the reaction S-adenosyl-L-methionine + a thiopurine = S-adenosyl-L-homocysteine + a thiopurine S-methylether.. The polypeptide is Thiopurine S-methyltransferase (Xanthomonas campestris pv. campestris (strain 8004)).